Reading from the N-terminus, the 238-residue chain is Survival of motor neuron-related-splicing factor 30 (238 aa).

The region spanning 72 to 132 is the Tudor domain; it reads SWKVGDKCMA…KPVEEGRKAK (61 aa). A Nuclear localization signal motif is present at residues 142–160; sequence KKEMIAQQREYKKKKALKK. The residue at position 201 (S201) is a Phosphoserine. Position 219 is an N6-acetyllysine (K219).

It belongs to the SMN family. In terms of assembly, associates with spliceosomes. Associates with U4/U5/U6 tri-snRNP and with U2 snRNP. Interacts (via Tudor domain) with SNRPD3 (via C-terminus); the interaction is direct. As to expression, detected at intermediate levels in skeletal muscle, and at low levels in heart and pancreas.

Its subcellular location is the nucleus speckle. The protein resides in the nucleus. It is found in the cajal body. Involved in spliceosome assembly. The chain is Survival of motor neuron-related-splicing factor 30 (SMNDC1) from Homo sapiens (Human).